A 481-amino-acid chain; its full sequence is uncharacterized protein (481 aa).

Residues 1-28 (MPQSNHYSHQSRSHNDRRRQQPDEKVQA) are disordered. Positions 29 to 87 (TVNIGQRFPLTIRRLGINGEGIGYYKHVITFVKGALPEEVVVAEVTAVHPRYLEAKIRS) constitute a TRAM domain. Gln313, Tyr342, Asp363, and Asp411 together coordinate S-adenosyl-L-methionine. Cys438 functions as the Nucleophile in the catalytic mechanism.

It belongs to the class I-like SAM-binding methyltransferase superfamily. RNA M5U methyltransferase family.

This is an uncharacterized protein from Lactiplantibacillus plantarum (strain ATCC BAA-793 / NCIMB 8826 / WCFS1) (Lactobacillus plantarum).